The sequence spans 309 residues: Syndecan-1 (309 aa).

Positions Met1–Pro22 are cleaved as a signal peptide. The Extracellular portion of the chain corresponds to Gln23 to Gly253. Disordered regions lie at residues Asn28 to Leu57 and Thr145 to Ser185. The span at Glu32–Asp42 shows a compositional bias: acidic residues. Ser37 carries O-linked (Xyl...) (chondroitin sulfate) serine glycosylation. An N-linked (GlcNAc...) asparagine glycan is attached at Asn43. Residues Ser45 and Ser47 are each glycosylated (O-linked (Xyl...) (heparan sulfate) serine). The span at Gly173–Gly183 shows a compositional bias: low complexity. Residues Ser205 and Ser215 are each glycosylated (O-linked (Xyl...) (chondroitin sulfate) serine). The chain crosses the membrane as a helical span at residues Gly254–Leu274. Topologically, residues Tyr275 to Ala309 are cytoplasmic. Positions Gly283 to Ala309 are disordered. Ser284 is modified (phosphoserine).

This sequence belongs to the syndecan proteoglycan family. As to quaternary structure, interacts with CDCP1. Interacts (via C-terminus) with TIAM1 (via PDZ domain). Interacts with MDK. Shedding is enhanced by a number of factors such as heparanase, thrombin or EGF. Also by stress and wound healing. PMA-mediated shedding is inhibited by TIMP3.

The protein resides in the membrane. The protein localises to the secreted. It localises to the extracellular exosome. In terms of biological role, cell surface proteoglycan that contains both heparan sulfate and chondroitin sulfate and that links the cytoskeleton to the interstitial matrix. Regulates exosome biogenesis in concert with SDCBP and PDCD6IP. Able to induce its own expression in dental mesenchymal cells and also in the neighboring dental epithelial cells via an MSX1-mediated pathway. The protein is Syndecan-1 of Mesocricetus auratus (Golden hamster).